The primary structure comprises 147 residues: Large ribosomal subunit protein uL22 (147 aa).

The disordered stretch occupies residues 110-147 (EEKKTVAKKAPAAKKTTTTKAPAKKTTSTKKATAKKES). Residues 117–140 (KKAPAAKKTTTTKAPAKKTTSTKK) are compositionally biased toward low complexity.

It belongs to the universal ribosomal protein uL22 family. As to quaternary structure, part of the 50S ribosomal subunit.

In terms of biological role, this protein binds specifically to 23S rRNA; its binding is stimulated by other ribosomal proteins, e.g. L4, L17, and L20. It is important during the early stages of 50S assembly. It makes multiple contacts with different domains of the 23S rRNA in the assembled 50S subunit and ribosome. Functionally, the globular domain of the protein is located near the polypeptide exit tunnel on the outside of the subunit, while an extended beta-hairpin is found that lines the wall of the exit tunnel in the center of the 70S ribosome. This chain is Large ribosomal subunit protein uL22, found in Campylobacter jejuni subsp. jejuni serotype O:6 (strain 81116 / NCTC 11828).